The sequence spans 484 residues: MLPHTISEIISGLRDKQFSSREITQDYLARIKRLNPELNCFITVTEDLALSQAEQADARLNAGQTSVLNGVPLAHKDVFCTEGVTTTCGSRMLEKFVPPYESTVTRKFIDAGAVTLGKTNMDEFAMGSSNENSYFGPVRNPWDTERAPGGSSGGSAAAVAAGLCAAATGTDTGGSIRQPAAFCGLTGLKPTYGRVSRLGMVAFASSLDQGGPFARTAEDAALLLNVMAGHDPMDSTSALNPTEDYTSALAQPLAGVTIGLPKEYFSNQLNAEVEKALQEAIKVYESLGASFKEVSLPHTELSVPAYYVIAPAECSTNLSRFDGVRYGHRCENPKDLEDLYQRSRSEGFGDEVKRRILIGTYALSAGYYDAYYRQAQKIRRLIKNDFVSALNEVDALLCPTTPDVAFRLGEKTSDPVQMYLEDIFTIPASLAGLPALGLPCGFKGGLPVGMQLIGNYFTEARLLNLGHQYQLNTDWHKRSPALGE.

Catalysis depends on charge relay system residues K76 and S151. S175 functions as the Acyl-ester intermediate in the catalytic mechanism.

This sequence belongs to the amidase family. GatA subfamily. In terms of assembly, heterotrimer of A, B and C subunits.

It catalyses the reaction L-glutamyl-tRNA(Gln) + L-glutamine + ATP + H2O = L-glutaminyl-tRNA(Gln) + L-glutamate + ADP + phosphate + H(+). Allows the formation of correctly charged Gln-tRNA(Gln) through the transamidation of misacylated Glu-tRNA(Gln) in organisms which lack glutaminyl-tRNA synthetase. The reaction takes place in the presence of glutamine and ATP through an activated gamma-phospho-Glu-tRNA(Gln). This is Glutamyl-tRNA(Gln) amidotransferase subunit A from Hahella chejuensis (strain KCTC 2396).